The sequence spans 319 residues: Free fatty acid receptor 3 (319 aa).

Topologically, residues 1–15 are extracellular; the sequence is MGTSFFLGNYWLFFS. Residues 16 to 36 form a helical membrane-spanning segment; the sequence is VYLLVFLVGLPLNVMALVVFV. Topologically, residues 37-43 are cytoplasmic; it reads GKLRRRP. Residues 44–64 traverse the membrane as a helical segment; that stretch reads VAVDLLLLNLTISDLLLLLFL. Residues 65–98 lie on the Extracellular side of the membrane; it reads PFRMVEAACGMRWLLPFIFCPLSGFLFFTTIYLT. C84 and C165 are disulfide-bonded. The helical transmembrane segment at 99–119 threads the bilayer; the sequence is SLFLTAVSIERFLSVAYPLWY. The Cytoplasmic portion of the chain corresponds to 120–127; sequence KTRPRLAQ. The helical transmembrane segment at 128–148 threads the bilayer; the sequence is AGLVSVVCWFLASAHCSVVYI. Residues 149–183 lie on the Extracellular side of the membrane; that stretch reads TEYWGNATYSQGTNGTCYLEFREDQLAILLPVRLE. N-linked (GlcNAc...) asparagine glycosylation is found at N154 and N162. Residues 184–206 traverse the membrane as a helical segment; sequence MAVVLFMVPLCITSYCYSRLVWI. Topologically, residues 207–218 are cytoplasmic; it reads LSRGASRRRRKR. A helical membrane pass occupies residues 219-239; the sequence is IMGLLAATLLIFFVCFGPYNM. The Extracellular portion of the chain corresponds to 240–254; the sequence is SHVVGYVSRESPSWR. Residues 255–275 traverse the membrane as a helical segment; the sequence is SYVLLLSTLNSCIDPLVFYFS. The Cytoplasmic segment spans residues 276–319; the sequence is SSKFQADFHQLLGRLLRTCVPWTQQVSLELKVKNGEEPSKECPS.

This sequence belongs to the G-protein coupled receptor 1 family. In terms of tissue distribution, expressed in white adipose tissue and skeletal muscle (at protein level). Abundantly expressed in sympathetic ganglia such as the superior cervical ganglion. Also expressed by intestinal endocrine cells.

The protein resides in the cell membrane. Its function is as follows. G protein-coupled receptor that is activated by a major product of dietary fiber digestion, the short chain fatty acids (SCFAs), and that plays a role in the regulation of whole-body energy homeostasis and in intestinal immunity. In omnivorous mammals, the short chain fatty acids acetate, propionate and butyrate are produced primarily by the gut microbiome that metabolizes dietary fibers. SCFAs serve as a source of energy but also act as signaling molecules. That G protein-coupled receptor is probably coupled to the pertussis toxin-sensitive, G(i/o)-alpha family of G proteins. Its activation results in the formation of inositol 1,4,5-trisphosphate, the mobilization of intracellular calcium, the phosphorylation of the MAPK3/ERK1 and MAPK1/ERK2 kinases and the inhibition of intracellular cAMP accumulation. Activated by SCFAs and by beta-hydroxybutyrate, a ketone body produced by the liver upon starvation, it inhibits N-type calcium channels and modulates the activity of sympathetic neurons through a signaling cascade involving the beta and gamma subunits of its coupled G protein, phospholipase C and MAP kinases. Thereby, it may regulate energy expenditure through the control of the sympathetic nervous system that controls for instance heart rate. Upon activation by SCFAs accumulating in the intestine, it may also signal to the brain via neural circuits which in turn would regulate intestinal gluconeogenesis. May also control the production of hormones involved in whole-body energy homeostasis. May for instance, regulate blood pressure through renin secretion. May also regulate secretion of the PYY peptide by enteroendocrine cells and control gut motility, intestinal transit rate, and the harvesting of energy from SCFAs produced by gut microbiota. May also indirectly regulate the production of LEP/Leptin, a hormone acting on the CNS to inhibit food intake, in response to the presence of short-chain fatty acids in the intestine. Finally, may also play a role in glucose homeostasis. Besides its role in energy homeostasis, may play a role in intestinal immunity. May mediate the activation of the inflammatory and immune response by SCFAs in the gut, regulating the rapid production of chemokines and cytokines by intestinal epithelial cells. Exhibits an SCFA-independent constitutive G protein-coupled receptor activity. The sequence is that of Free fatty acid receptor 3 (Ffar3) from Mus musculus (Mouse).